The chain runs to 296 residues: Adrenocorticotropic hormone receptor (296 aa).

Residues 1–23 (MKHIINSYEHTNDTARNNSDCPD) are Extracellular-facing. N-linked (GlcNAc...) asparagine glycans are attached at residues Asn-12 and Asn-17. 2 disulfide bridges follow: Cys-21–Cys-253 and Cys-245–Cys-251. A helical transmembrane segment spans residues 24-49 (VVLPEEIFFTISVIGILENLIVLLAV). Residues 50 to 58 (IKNKNLQSP) lie on the Cytoplasmic side of the membrane. The helical transmembrane segment at 59–79 (MYFFICSLAISDMLGSLYKIL) threads the bilayer. Over 80 to 104 (ENILIMFRNMGYLKPRGSFESTADD) the chain is Extracellular. A helical transmembrane segment spans residues 105-126 (IIDCMFILSLLGSIFSLSVIAA). The Cytoplasmic portion of the chain corresponds to 127–147 (DRYITIFHALQYHSIVTMRRT). A helical transmembrane segment spans residues 148 to 168 (IITLTIIWMFCTGSGITMVIF). Residues 169–180 (SHHIPTVLTFTS) lie on the Extracellular side of the membrane. Residues 181–199 (LFPLMLVFILCLYIHMFLL) traverse the membrane as a helical segment. Residues 200-217 (ARSHARKISTLPRTNMKG) are Cytoplasmic-facing. Residues 218–244 (AMTLTILLGVFIFCWAPFVLHVLLMTF) form a helical membrane-spanning segment. At 245-256 (CPNNPYCVCYMS) the chain is on the extracellular side. Residues 257 to 278 (LFQVNGMLIMCNAVIDPFIYAF) form a helical membrane-spanning segment. Residues 279 to 296 (RSPELRDAFKRMLFCNRY) are Cytoplasmic-facing. Residue Cys-293 is the site of S-palmitoyl cysteine attachment.

It belongs to the G-protein coupled receptor 1 family. In terms of assembly, homodimer. Interacts with corticotropin (ACTH). Interacts with MRAP; this interaction targets MC2R to the plasma membrane. Interacts with MRAP2; competing with MRAP for binding to MC2R and impairing the binding of corticotropin (ACTH). In terms of processing, ubiquitinated by MGRN1 that may be involved in post-endocytic trafficking and/or degradation of internalized receptor.

The protein localises to the cell membrane. Its function is as follows. Hormone receptor primarily expressed in adrenal cortex that plays a key role in regulating adrenocortical function. Upon corticotropin (ACTH) binding, facilitates the release of adrenal glucocorticoids, including cortisol and corticosterone. In addition, MC2R is required for fetal and neonatal adrenal gland development. Mechanistically, activates adenylate cyclase (cAMP), the MAPK cascade as well as the cAMP-dependent protein kinase A pathway leading to steroidogenic factor 1/NR5A1-mediated transcriptional activation. In Mus musculus (Mouse), this protein is Adrenocorticotropic hormone receptor (Mc2r).